The following is a 271-amino-acid chain: Ribosomal RNA small subunit methyltransferase A (271 aa).

Residues N18, L20, G45, E66, D91, and N112 each contribute to the S-adenosyl-L-methionine site.

This sequence belongs to the class I-like SAM-binding methyltransferase superfamily. rRNA adenine N(6)-methyltransferase family. RsmA subfamily.

The protein localises to the cytoplasm. The enzyme catalyses adenosine(1518)/adenosine(1519) in 16S rRNA + 4 S-adenosyl-L-methionine = N(6)-dimethyladenosine(1518)/N(6)-dimethyladenosine(1519) in 16S rRNA + 4 S-adenosyl-L-homocysteine + 4 H(+). In terms of biological role, specifically dimethylates two adjacent adenosines (A1518 and A1519) in the loop of a conserved hairpin near the 3'-end of 16S rRNA in the 30S particle. May play a critical role in biogenesis of 30S subunits. This chain is Ribosomal RNA small subunit methyltransferase A, found in Vibrio cholerae serotype O1 (strain ATCC 39315 / El Tor Inaba N16961).